A 262-amino-acid chain; its full sequence is MATKILALLALLALLVSATNAFIIPQCSLAPSAIIPQFLPPVTSMGFEHPAVQAYRLQLVLAASALQQPIAQLQQQSLAHLTLQTIATQQQQHFLPSLSHLAVVNPVAYLQQQLLASNPLALANVATYQQQQQLQQFMPALSQLAMVNPAVYLQLLSSSPLAVGNAPTYLQQQLLQQIVPALTHQLAMANPATYLQQLLPFNQLAVSNSAAYLQQRQQLLNPLAVANPLVATFLQQQQLLPYNQFSLMNPALQQPIVGGAIF.

The signal sequence occupies residues 1–21 (MATKILALLALLALLVSATNA).

This sequence belongs to the zein family.

The protein resides in the endoplasmic reticulum membrane. In terms of biological role, zeins are major seed storage proteins. The sequence is that of Protein FLOURY 2 from Zea mays (Maize).